A 460-amino-acid chain; its full sequence is Arginine biosynthesis bifunctional protein ArgJ, chloroplastic (460 aa).

The N-terminal 26 residues, 1–26 (MYLSVPHYPSLKFTAFQSHKRNFRVF), are a transit peptide targeting the chloroplast. Substrate is bound by residues T202, K228, T239, E328, N455, and T460. The active-site Nucleophile is T239.

The protein belongs to the ArgJ family. Heterodimer of an alpha and a beta chain.

It is found in the plastid. The protein resides in the chloroplast. It carries out the reaction N(2)-acetyl-L-ornithine + L-glutamate = N-acetyl-L-glutamate + L-ornithine. The catalysed reaction is L-glutamate + acetyl-CoA = N-acetyl-L-glutamate + CoA + H(+). The protein operates within amino-acid biosynthesis; L-arginine biosynthesis; L-ornithine and N-acetyl-L-glutamate from L-glutamate and N(2)-acetyl-L-ornithine (cyclic): step 1/1. Its pathway is amino-acid biosynthesis; L-arginine biosynthesis; N(2)-acetyl-L-ornithine from L-glutamate: step 1/4. Functionally, catalyzes two activities which are involved in the cyclic version of arginine biosynthesis: the synthesis of acetylglutamate from glutamate and acetyl-CoA, and of ornithine by transacetylation between acetylornithine and glutamate. This chain is Arginine biosynthesis bifunctional protein ArgJ, chloroplastic, found in Citrullus lanatus (Watermelon).